The chain runs to 160 residues: Cytochrome b6-f complex subunit 4 (160 aa).

A run of 3 helical transmembrane segments spans residues 36 to 56 (LLYIFPVVILGTIACNVGLAV), 95 to 115 (LLGVLLMASVPAGLLTVPFLE), and 131 to 151 (TVFLVGTVVALWLGIGATLPI).

The protein belongs to the cytochrome b family. PetD subfamily. As to quaternary structure, the 4 large subunits of the cytochrome b6-f complex are cytochrome b6, subunit IV (17 kDa polypeptide, petD), cytochrome f and the Rieske protein, while the 4 small subunits are petG, petL, petM and petN. The complex functions as a dimer.

The protein resides in the plastid. The protein localises to the chloroplast thylakoid membrane. In terms of biological role, component of the cytochrome b6-f complex, which mediates electron transfer between photosystem II (PSII) and photosystem I (PSI), cyclic electron flow around PSI, and state transitions. In Spinacia oleracea (Spinach), this protein is Cytochrome b6-f complex subunit 4.